The following is a 221-amino-acid chain: Phosphoribosylformylglycinamidine synthase subunit PurQ (221 aa).

The Glutamine amidotransferase type-1 domain occupies A3–A221. C87 serves as the catalytic Nucleophile. Active-site residues include H195 and E197.

In terms of assembly, part of the FGAM synthase complex composed of 1 PurL, 1 PurQ and 2 PurS subunits.

The protein resides in the cytoplasm. The enzyme catalyses N(2)-formyl-N(1)-(5-phospho-beta-D-ribosyl)glycinamide + L-glutamine + ATP + H2O = 2-formamido-N(1)-(5-O-phospho-beta-D-ribosyl)acetamidine + L-glutamate + ADP + phosphate + H(+). The catalysed reaction is L-glutamine + H2O = L-glutamate + NH4(+). It participates in purine metabolism; IMP biosynthesis via de novo pathway; 5-amino-1-(5-phospho-D-ribosyl)imidazole from N(2)-formyl-N(1)-(5-phospho-D-ribosyl)glycinamide: step 1/2. Part of the phosphoribosylformylglycinamidine synthase complex involved in the purines biosynthetic pathway. Catalyzes the ATP-dependent conversion of formylglycinamide ribonucleotide (FGAR) and glutamine to yield formylglycinamidine ribonucleotide (FGAM) and glutamate. The FGAM synthase complex is composed of three subunits. PurQ produces an ammonia molecule by converting glutamine to glutamate. PurL transfers the ammonia molecule to FGAR to form FGAM in an ATP-dependent manner. PurS interacts with PurQ and PurL and is thought to assist in the transfer of the ammonia molecule from PurQ to PurL. The chain is Phosphoribosylformylglycinamidine synthase subunit PurQ from Zymomonas mobilis subsp. mobilis (strain ATCC 31821 / ZM4 / CP4).